A 435-amino-acid chain; its full sequence is Tubulin-like protein TubZ (435 aa).

Residues 25 to 26 (MG), 124 to 126 (GTG), N185, and N209 each bind GTP. Residues 403–435 (QEEKPKKKKLNFGAEPEAEVADDSQPTKKKLSF) are disordered.

Belongs to the FtsZ family. TubZ subfamily. As to quaternary structure, polymerizes to form two-stranded filaments and bundles at higher concentration in the presence of GTP. Binds to the TubR-tubC protein DNA complex.

It is found in the cytoplasm. It catalyses the reaction GTP + H2O = GDP + phosphate + H(+). GTPase inhibited by GTP-gamma-S, which also stabilizes filaments. In terms of biological role, a tubulin-like, filament forming GTPase; the motor component of the type III plasmid partition system which ensures correct segregation of the pXO1 plasmid. Essential for plasmid replication. The filaments seed from a DNA centromere-like site (tubC)-TubR complex which extends to surround the TubZ filaments. Highly dynamic filaments grow at the plus end and depolymerize at the minus end, a process called treadmilling. TubR-tubC complexes track the depolymerizing minus end of the filament, probably pulling plasmid within the cell. Has a high GTPase activity; in the presence of GTP assembles into dynamic filaments which bind almost exclusively GDP. Filament formation is cooperative, requiring a critical concentration. Formation occurs very quickly and is followed by disassembly as GTP is consumed. Small amounts of GTP-gamma-S stabilize filaments. Has high GTP and dGTPase activity, 6-fold lower ATPase activity. Forms filaments in the presence of ATP that also disassemble. Weakly binds DNA in a GTP-dependent, non-sequence-specific manner; GTP hydrolysis is not required for DNA-binding. The sequence is that of Tubulin-like protein TubZ from Bacillus anthracis.